The sequence spans 110 residues: UPF0060 membrane protein Rpal_4363 (110 aa).

The next 4 helical transmembrane spans lie at 4 to 24 (LLTF…FWAW), 31 to 51 (PLWL…LTLA), 59 to 79 (AYAA…WAIE), and 88 to 108 (VIGA…PRAL).

This sequence belongs to the UPF0060 family.

Its subcellular location is the cell inner membrane. This is UPF0060 membrane protein Rpal_4363 from Rhodopseudomonas palustris (strain TIE-1).